The following is a 947-amino-acid chain: Ionotropic receptor 25a (947 aa).

A signal peptide spans 1-30; the sequence is MILMNPKTSKILWLLGFLSLLSSFSLEIAA. The Extracellular segment spans residues 31-562; it reads QTTQNINVLF…SLFKFLTVLE (532 aa). Asn-78, Asn-177, Asn-277, and Asn-434 each carry an N-linked (GlcNAc...) asparagine glycan. A helical membrane pass occupies residues 563-583; the sequence is TNVWLCILAAYFFTSFLMWIF. Over 584–641 the chain is Cytoplasmic; that stretch reads DRWSPYSYQNNREKYKDDEEKREFNLKECLWFCMTSLTPQGGGEAPKNLSGRLVAATW. A helical membrane pass occupies residues 642 to 662; that stretch reads WLFGFIIIASYTANLAAFLTV. Topologically, residues 663–858 are extracellular; sequence SRLDTPVESL…DQSDGISIQN (196 aa). Asn-687, Asn-715, and Asn-762 each carry an N-linked (GlcNAc...) asparagine glycan. Residues 859 to 879 traverse the membrane as a helical segment; sequence IGGVFIVIFVGIGMACITLVF. At 880–947 the chain is on the cytoplasmic side; the sequence is EYWWYRYRKN…QYPATFKPRF (68 aa).

It belongs to the glutamate-gated ion channel (TC 1.A.10.1) family. As to quaternary structure, interacts with nocte. In the antenna, detected in neurons of the arista and also detected in sacculus neurons which innervate the first and second chambers (at protein level). Throughout the main body of the antenna, expressed in neurons which innervate the coeloconic class of olfactory sensilla (at protein level). Expressed in multiple cells of the dorsal organ including the dorsal organ cool cells (at protein level). Detected in femur and retina. Expressed in a subset of femur chordonotal neurons and antennal Johnston's Organ neurons.

It is found in the cell membrane. The protein resides in the cell projection. The protein localises to the axon. Its subcellular location is the dendrite. It localises to the perikaryon. It is found in the cilium. Its function is as follows. Integral part of various neural sensory systems in the antenna that provide the neural basis for the response to environmental changes in temperature (thermosensation), humidity (hygrosensation) and odor detection. Required for odor-evoked electrophysiological responses in multiple neuron classes in the antenna and is likely to function as part of an olfactory receptor complex with Ir76a and Ir76b. Together with Ir21a and Ir93a, mediates the response of the larval dorsal organ cool cells, a trio of cool-responsive neurons, to cooling and is required for cool avoidance behavior. Required in chordonotal organ neurons for behavioral synchronization to low-amplitude temperature cycles and mediates circadian clock resetting by temperature. Together with Ir40a and Ir93a, mediates the response of the hydrosensory sacculus neurons to changes in relative humidity, and is required for dry detection and humidiy preference behavior. This is Ionotropic receptor 25a from Drosophila melanogaster (Fruit fly).